The sequence spans 185 residues: MTNFVHKTVNGLKSLLDEKGAIKLFCSEGDIMEFLVTFSQDKATLNDIQSFEAKHQLTLPQDYQKFMTLHNGAKIFEILSDGENIGGGLQLFSLEEIEEELKYEDLFEDINGIPIGYLLEECHLMIDKDKVNQGDPNYLYIFESGLEYNPLNLNFEKFLDRYILANGEPFWDWRYYTAENYYRTR.

This is an uncharacterized protein from Bacillus subtilis (strain 168).